The sequence spans 1339 residues: Retrotransposon Gag-like protein 9 (1339 aa).

3 stretches are compositionally biased toward polar residues: residues 533-545 (TVPT…TQKT), 679-693 (SGTK…TTSG), and 700-711 (TRLSGPGATSTP). 6 disordered regions span residues 533-555 (TVPT…PMST), 679-711 (SGTK…TSTP), 845-864 (GVMS…SRPQ), 880-901 (PATA…LSTL), 982-1010 (ATSL…GAGS), and 1078-1116 (ATDS…PPKE). Positions 891 to 901 (RSPASSTLSTL) are enriched in low complexity. A compositionally biased stretch (polar residues) spans 1078–1106 (ATDSGEASTSHTRFTAPGSKSTPHMTSTA).

The sequence is that of Retrotransposon Gag-like protein 9 from Mus musculus (Mouse).